The sequence spans 230 residues: Demethylmenaquinone methyltransferase (230 aa).

S-adenosyl-L-methionine contacts are provided by residues T62, D80, D100–A101, and S117.

The protein belongs to the class I-like SAM-binding methyltransferase superfamily. MenG/UbiE family.

It catalyses the reaction a 2-demethylmenaquinol + S-adenosyl-L-methionine = a menaquinol + S-adenosyl-L-homocysteine + H(+). It participates in quinol/quinone metabolism; menaquinone biosynthesis; menaquinol from 1,4-dihydroxy-2-naphthoate: step 2/2. Methyltransferase required for the conversion of demethylmenaquinol (DMKH2) to menaquinol (MKH2). This chain is Demethylmenaquinone methyltransferase, found in Mycobacterium sp. (strain JLS).